A 194-amino-acid chain; its full sequence is Adenylate kinase (194 aa).

ATP is bound at residue 10–15 (GAGKGT). Residues 30 to 59 (STGDMLRAAVAQQSEIGKRAKAVMDAGQLV) form an NMP region. Residues T31, R36, 57–59 (QLV), 85–88 (GYPR), and Q92 each bind AMP. An LID region spans residues 126 to 142 (SRVAETIAKGGQVRSDD). R127 is an ATP binding site. Residues R139 and R150 each coordinate AMP. A178 provides a ligand contact to ATP.

Belongs to the adenylate kinase family. As to quaternary structure, monomer.

It localises to the cytoplasm. It catalyses the reaction AMP + ATP = 2 ADP. It participates in purine metabolism; AMP biosynthesis via salvage pathway; AMP from ADP: step 1/1. Its function is as follows. Catalyzes the reversible transfer of the terminal phosphate group between ATP and AMP. Plays an important role in cellular energy homeostasis and in adenine nucleotide metabolism. This Brucella canis (strain ATCC 23365 / NCTC 10854 / RM-666) protein is Adenylate kinase.